An 829-amino-acid chain; its full sequence is FAST kinase domain-containing protein 1, mitochondrial (829 aa).

Lysine 346 is subject to N6-acetyllysine. The RAP domain occupies 761–821 (IAIELLDVRA…KDARMDYLRE (61 aa)).

The protein belongs to the FAST kinase family. As to expression, expression detected in spleen, testis, colon, heart, smooth muscle, kidney, brain, lung, liver, brown and white adipose tissue with highest expression in heart and brown adipose tissue.

The protein resides in the mitochondrion. Functionally, involved in the down-regulation of mitochondrial MT-ND3 mRNA levels which leads to decreased respiratory complex I abundance and activity. This Mus musculus (Mouse) protein is FAST kinase domain-containing protein 1, mitochondrial (Fastkd1).